Here is a 118-residue protein sequence, read N- to C-terminus: Holo-[acyl-carrier-protein] synthase (118 aa).

Positions 5 and 50 each coordinate Mg(2+).

It belongs to the P-Pant transferase superfamily. AcpS family. Mg(2+) serves as cofactor.

The protein resides in the cytoplasm. The enzyme catalyses apo-[ACP] + CoA = holo-[ACP] + adenosine 3',5'-bisphosphate + H(+). Functionally, transfers the 4'-phosphopantetheine moiety from coenzyme A to a Ser of acyl-carrier-protein. This chain is Holo-[acyl-carrier-protein] synthase, found in Wolinella succinogenes (strain ATCC 29543 / DSM 1740 / CCUG 13145 / JCM 31913 / LMG 7466 / NCTC 11488 / FDC 602W) (Vibrio succinogenes).